We begin with the raw amino-acid sequence, 399 residues long: Phosphoglycerate kinase (399 aa).

Residues 22-24 (DFN), R38, 61-64 (HLGR), R120, and R153 each bind substrate. Residues K206, G297, E328, and 354–357 (GGDT) contribute to the ATP site.

Belongs to the phosphoglycerate kinase family. Monomer.

It localises to the cytoplasm. It carries out the reaction (2R)-3-phosphoglycerate + ATP = (2R)-3-phospho-glyceroyl phosphate + ADP. The protein operates within carbohydrate degradation; glycolysis; pyruvate from D-glyceraldehyde 3-phosphate: step 2/5. The polypeptide is Phosphoglycerate kinase (Campylobacter concisus (strain 13826)).